The sequence spans 417 residues: Voltage-gated ClC-type chloride channel ClcB (417 aa).

The next 11 membrane-spanning stretches (helical) occupy residues 5–25 (LLIATIIGILAALAVAGFRHA), 54–74 (LITPAVGGLAAGALLWGWQKM), 146–166 (LWIACGAAAGMASAYHAPLAG), 168–188 (LFIAEILFGTLMLASLGPVVI), 190–210 (AVVALLTTHLLSGGNALLYTV), 222–242 (AMIISTGLVAGVCGPLFMWLM), 258–278 (WQLALGGFIVGLLSLLTPAVW), 288–308 (FLLSPPLLSVIAGIFICKLLA), 316–336 (GAPGGVFTPTLFIGLSIGMLY), 339–359 (MWGFWLPGADEMAILLGLTGM), and 380–400 (MTGEYRLLPGLLIACVVASVL).

Belongs to the chloride channel (TC 2.A.49) family. ClcB subfamily.

It is found in the cell inner membrane. Probably acts as an electrical shunt for an outwardly-directed proton pump that is linked to amino acid decarboxylation, as part of the extreme acid resistance (XAR) response. The polypeptide is Voltage-gated ClC-type chloride channel ClcB (Citrobacter koseri (strain ATCC BAA-895 / CDC 4225-83 / SGSC4696)).